The following is a 293-amino-acid chain: Bifunctional protein FolD (293 aa).

Residues 164–166 (GRS), Ser193, and Thr234 contribute to the NADP(+) site.

The protein belongs to the tetrahydrofolate dehydrogenase/cyclohydrolase family. Homodimer.

It catalyses the reaction (6R)-5,10-methylene-5,6,7,8-tetrahydrofolate + NADP(+) = (6R)-5,10-methenyltetrahydrofolate + NADPH. The catalysed reaction is (6R)-5,10-methenyltetrahydrofolate + H2O = (6R)-10-formyltetrahydrofolate + H(+). Its pathway is one-carbon metabolism; tetrahydrofolate interconversion. Catalyzes the oxidation of 5,10-methylenetetrahydrofolate to 5,10-methenyltetrahydrofolate and then the hydrolysis of 5,10-methenyltetrahydrofolate to 10-formyltetrahydrofolate. The sequence is that of Bifunctional protein FolD from Phocaeicola vulgatus (strain ATCC 8482 / DSM 1447 / JCM 5826 / CCUG 4940 / NBRC 14291 / NCTC 11154) (Bacteroides vulgatus).